Reading from the N-terminus, the 485-residue chain is dTDP-4-amino-4,6-dideoxy-D-glucose ammonia-lyase (485 aa).

Residues C141, C145, and C148 each contribute to the [4Fe-4S] cluster site.

Belongs to the radical SAM superfamily. DesII family. In terms of assembly, monomer. [4Fe-4S] cluster is required as a cofactor.

It catalyses the reaction dTDP-4-amino-4,6-dideoxy-alpha-D-glucose + AH2 + S-adenosyl-L-methionine = dTDP-3-dehydro-4,6-dideoxy-alpha-D-glucose + 5'-deoxyadenosine + L-methionine + A + NH4(+) + H(+). Involved in the biosynthesis of dTDP-alpha-D-desosamine, a sugar found in several bacterial macrolide antibiotics. Catalyzes the SAM-dependent deamination of dTDP-4-amino-4,6-deoxyglucose (dTDP-viosamine) to yield dTDP-3-keto-4,6-deoxyglucose. It can also catalyze the oxidative dehydrogenation of the non-physiological substrate dTDP-D-quinovose to dTDP-3-keto-6-deoxy-d-glucose. It can also deaminate dTDP-3-amino-3,6-deoxyglucose. In Streptomyces venezuelae, this protein is dTDP-4-amino-4,6-dideoxy-D-glucose ammonia-lyase.